The following is a 396-amino-acid chain: Cell division protein FtsZ 1 (396 aa).

Residues 1-38 (MDSIVQDAIDEAEESEDSASEPADVAGGGGDTVPTGTM) form a disordered region. The segment covering 8–19 (AIDEAEESEDSA) has biased composition (acidic residues). GTP contacts are provided by residues 61 to 65 (GAGSN), 148 to 150 (GTG), Glu-179, Arg-183, and Asp-226. A disordered region spans residues 358–396 (QIYGRNEAAEGDGPAQESTPEPEPEPQAGSEIEDIDYVE).

It belongs to the FtsZ family. As to quaternary structure, homodimer. Polymerizes to form a dynamic ring structure in a strictly GTP-dependent manner. Interacts directly with several other division proteins.

Its subcellular location is the cytoplasm. Essential cell division protein that forms a contractile ring structure (Z ring) at the future cell division site. The regulation of the ring assembly controls the timing and the location of cell division. One of the functions of the FtsZ ring is to recruit other cell division proteins to the septum to produce a new cell wall between the dividing cells. Binds GTP and shows GTPase activity. The protein is Cell division protein FtsZ 1 of Halobacterium salinarum (strain ATCC 29341 / DSM 671 / R1).